A 94-amino-acid polypeptide reads, in one-letter code: uncharacterized protein (94 aa).

In terms of biological role, could be a silencing control element for the regulation of the restriction system. This is an uncharacterized protein from Herpetosiphon aurantiacus (Herpetosiphon giganteus).